The chain runs to 379 residues: 1-deoxy-D-xylulose 5-phosphate reductoisomerase (379 aa).

The NADPH site is built by threonine 10, glycine 11, serine 12, isoleucine 13, arginine 38, asparagine 39, and asparagine 121. Residue lysine 122 participates in 1-deoxy-D-xylulose 5-phosphate binding. Glutamate 123 is a binding site for NADPH. Residue aspartate 147 participates in Mn(2+) binding. Serine 148, glutamate 149, serine 173, and histidine 196 together coordinate 1-deoxy-D-xylulose 5-phosphate. Residue glutamate 149 coordinates Mn(2+). Glycine 202 contacts NADPH. 1-deoxy-D-xylulose 5-phosphate is bound by residues serine 209, asparagine 214, lysine 215, and glutamate 218. Glutamate 218 contributes to the Mn(2+) binding site.

This sequence belongs to the DXR family. Mg(2+) serves as cofactor. It depends on Mn(2+) as a cofactor.

It carries out the reaction 2-C-methyl-D-erythritol 4-phosphate + NADP(+) = 1-deoxy-D-xylulose 5-phosphate + NADPH + H(+). The protein operates within isoprenoid biosynthesis; isopentenyl diphosphate biosynthesis via DXP pathway; isopentenyl diphosphate from 1-deoxy-D-xylulose 5-phosphate: step 1/6. Catalyzes the NADPH-dependent rearrangement and reduction of 1-deoxy-D-xylulose-5-phosphate (DXP) to 2-C-methyl-D-erythritol 4-phosphate (MEP). The sequence is that of 1-deoxy-D-xylulose 5-phosphate reductoisomerase from Chlamydia trachomatis serovar A (strain ATCC VR-571B / DSM 19440 / HAR-13).